A 427-amino-acid polypeptide reads, in one-letter code: Ribosomal protein uS12 methylthiotransferase RimO (427 aa).

Residues 1-116 (MNFYVEVLGC…IATHIGKRNV (116 aa)) enclose the MTTase N-terminal domain. Residues C10, C46, C79, C145, C149, and C152 each contribute to the [4Fe-4S] cluster site. The region spanning 131–360 (VDNGQYAYVK…MDIQSQISFE (230 aa)) is the Radical SAM core domain. Residues 363 to 426 (EKLVGKKLKV…IYDLEGEIVE (64 aa)) enclose the TRAM domain.

It belongs to the methylthiotransferase family. RimO subfamily. The cofactor is [4Fe-4S] cluster.

It is found in the cytoplasm. The enzyme catalyses L-aspartate(89)-[ribosomal protein uS12]-hydrogen + (sulfur carrier)-SH + AH2 + 2 S-adenosyl-L-methionine = 3-methylsulfanyl-L-aspartate(89)-[ribosomal protein uS12]-hydrogen + (sulfur carrier)-H + 5'-deoxyadenosine + L-methionine + A + S-adenosyl-L-homocysteine + 2 H(+). Catalyzes the methylthiolation of an aspartic acid residue of ribosomal protein uS12. The chain is Ribosomal protein uS12 methylthiotransferase RimO from Thermosipho melanesiensis (strain DSM 12029 / CIP 104789 / BI429).